The primary structure comprises 90 residues: MKAIEVDVFGLVQGVGFRWFAQRTAQQHNIVGWVSNQTDGSVKIHAQGSQSDLIDFLSVLEKGPGFYSRVDKVITTNIPLFETNDFAIRG.

Residues 3–90 (AIEVDVFGLV…FETNDFAIRG (88 aa)) enclose the Acylphosphatase-like domain. Catalysis depends on residues Arg18 and Asn36.

Belongs to the acylphosphatase family.

It catalyses the reaction an acyl phosphate + H2O = a carboxylate + phosphate + H(+). The polypeptide is Acylphosphatase (acyP) (Leuconostoc mesenteroides subsp. mesenteroides (strain ATCC 8293 / DSM 20343 / BCRC 11652 / CCM 1803 / JCM 6124 / NCDO 523 / NBRC 100496 / NCIMB 8023 / NCTC 12954 / NRRL B-1118 / 37Y)).